The chain runs to 652 residues: DNA ligase (652 aa).

NAD(+) is bound by residues 29-33 (DSEYD), 78-79 (SL), and E107. K109 acts as the N6-AMP-lysine intermediate in catalysis. NAD(+)-binding residues include R130, E164, K278, and K302. Positions 395, 398, 413, and 418 each coordinate Zn(2+). The BRCT domain maps to 577 to 652 (AADAVLSGKT…IQDEAWLEQL (76 aa)).

Belongs to the NAD-dependent DNA ligase family. LigA subfamily. Mg(2+) is required as a cofactor. The cofactor is Mn(2+).

It carries out the reaction NAD(+) + (deoxyribonucleotide)n-3'-hydroxyl + 5'-phospho-(deoxyribonucleotide)m = (deoxyribonucleotide)n+m + AMP + beta-nicotinamide D-nucleotide.. Functionally, DNA ligase that catalyzes the formation of phosphodiester linkages between 5'-phosphoryl and 3'-hydroxyl groups in double-stranded DNA using NAD as a coenzyme and as the energy source for the reaction. It is essential for DNA replication and repair of damaged DNA. The polypeptide is DNA ligase (Streptococcus gordonii (strain Challis / ATCC 35105 / BCRC 15272 / CH1 / DL1 / V288)).